Here is a 382-residue protein sequence, read N- to C-terminus: ATP phosphoribosyltransferase regulatory subunit (382 aa).

It belongs to the class-II aminoacyl-tRNA synthetase family. HisZ subfamily. As to quaternary structure, heteromultimer composed of HisG and HisZ subunits.

Its subcellular location is the cytoplasm. It participates in amino-acid biosynthesis; L-histidine biosynthesis; L-histidine from 5-phospho-alpha-D-ribose 1-diphosphate: step 1/9. Its function is as follows. Required for the first step of histidine biosynthesis. May allow the feedback regulation of ATP phosphoribosyltransferase activity by histidine. This is ATP phosphoribosyltransferase regulatory subunit from Burkholderia ambifaria (strain ATCC BAA-244 / DSM 16087 / CCUG 44356 / LMG 19182 / AMMD) (Burkholderia cepacia (strain AMMD)).